The following is a 309-amino-acid chain: Pyridoxal 5'-phosphate synthase subunit PDX1.3 (309 aa).

Methionine 1 is subject to N-acetylmethionine. D-ribose 5-phosphate is bound at residue aspartate 40. The active-site Schiff-base intermediate with D-ribose 5-phosphate is lysine 97. Glycine 169 is a binding site for D-ribose 5-phosphate. Arginine 181 lines the D-glyceraldehyde 3-phosphate pocket. D-ribose 5-phosphate-binding positions include glycine 230 and 251 to 252; that span reads GS.

This sequence belongs to the PdxS/SNZ family. In terms of assembly, homodimer or heterodimer with PDX1.1 or PDX1.2. Interacts with PDX2. In terms of tissue distribution, expressed in cotyledons, rapidly dividing root stele tissues, stems, leaves, flowers, mature pollen, and siliques.

It localises to the cytoplasm. It is found in the cell membrane. Its subcellular location is the membrane. It carries out the reaction aldehydo-D-ribose 5-phosphate + D-glyceraldehyde 3-phosphate + L-glutamine = pyridoxal 5'-phosphate + L-glutamate + phosphate + 3 H2O + H(+). It participates in cofactor biosynthesis; pyridoxal 5'-phosphate biosynthesis. Its function is as follows. Catalyzes the formation of pyridoxal 5'-phosphate from ribose 5-phosphate (RBP), glyceraldehyde 3-phosphate (G3P) and ammonia. The ammonia is provided by PDX2. Can also use ribulose 5-phosphate and dihydroxyacetone phosphate as substrates, resulting from enzyme-catalyzed isomerization of RBP and G3P, respectively. Also plays an indirect role in resistance to singlet oxygen-generating photosensitizers. The sequence is that of Pyridoxal 5'-phosphate synthase subunit PDX1.3 (PDX13) from Arabidopsis thaliana (Mouse-ear cress).